Consider the following 419-residue polypeptide: Multifunctional CCA protein (419 aa).

The ATP site is built by glycine 8 and arginine 11. CTP-binding residues include glycine 8 and arginine 11. Mg(2+) is bound by residues aspartate 21 and aspartate 23. ATP contacts are provided by arginine 91, arginine 137, and arginine 140. The CTP site is built by arginine 91, arginine 137, and arginine 140. One can recognise an HD domain in the interval 228–334; that stretch reads SFLHTMLVLQ…IKLFNKLDVW (107 aa).

The protein belongs to the tRNA nucleotidyltransferase/poly(A) polymerase family. Bacterial CCA-adding enzyme type 1 subfamily. As to quaternary structure, monomer. Can also form homodimers and oligomers. Requires Mg(2+) as cofactor. It depends on Ni(2+) as a cofactor.

The catalysed reaction is a tRNA precursor + 2 CTP + ATP = a tRNA with a 3' CCA end + 3 diphosphate. The enzyme catalyses a tRNA with a 3' CCA end + 2 CTP + ATP = a tRNA with a 3' CCACCA end + 3 diphosphate. In terms of biological role, catalyzes the addition and repair of the essential 3'-terminal CCA sequence in tRNAs without using a nucleic acid template. Adds these three nucleotides in the order of C, C, and A to the tRNA nucleotide-73, using CTP and ATP as substrates and producing inorganic pyrophosphate. tRNA 3'-terminal CCA addition is required both for tRNA processing and repair. Also involved in tRNA surveillance by mediating tandem CCA addition to generate a CCACCA at the 3' terminus of unstable tRNAs. While stable tRNAs receive only 3'-terminal CCA, unstable tRNAs are marked with CCACCA and rapidly degraded. In Mannheimia succiniciproducens (strain KCTC 0769BP / MBEL55E), this protein is Multifunctional CCA protein.